A 255-amino-acid chain; its full sequence is Proteasome subunit alpha type-3 (255 aa).

Ser2 is subject to N-acetylserine. 3 positions are modified to N6-acetyllysine: Lys57, Lys206, and Lys230. Phosphoserine is present on residues Ser243 and Ser250.

It belongs to the peptidase T1A family. In terms of assembly, the 26S proteasome consists of a 20S proteasome core and two 19S regulatory subunits. The 20S proteasome core is a barrel-shaped complex made of 28 subunits that are arranged in four stacked rings. The two outer rings are each formed by seven alpha subunits, and the two inner rings are formed by seven beta subunits. The proteolytic activity is exerted by three beta-subunits PSMB5, PSMB6 and PSMB7. Interacts with AURKB. Interacts with CDKN1A. Interacts with MDM2 and RB1. Interacts with the C-terminus of TBXA2R isoform 2. Interacts with DNAJB2.

It localises to the cytoplasm. The protein resides in the nucleus. In terms of biological role, component of the 20S core proteasome complex involved in the proteolytic degradation of most intracellular proteins. This complex plays numerous essential roles within the cell by associating with different regulatory particles. Associated with two 19S regulatory particles, forms the 26S proteasome and thus participates in the ATP-dependent degradation of ubiquitinated proteins. The 26S proteasome plays a key role in the maintenance of protein homeostasis by removing misfolded or damaged proteins that could impair cellular functions, and by removing proteins whose functions are no longer required. Associated with the PA200 or PA28, the 20S proteasome mediates ubiquitin-independent protein degradation. This type of proteolysis is required in several pathways including spermatogenesis (20S-PA200 complex) or generation of a subset of MHC class I-presented antigenic peptides (20S-PA28 complex). Binds to the C-terminus of CDKN1A and thereby mediates its degradation. Negatively regulates the membrane trafficking of the cell-surface thromboxane A2 receptor (TBXA2R) isoform 2. This Bos taurus (Bovine) protein is Proteasome subunit alpha type-3 (PSMA3).